The sequence spans 113 residues: Hydrogenase maturation factor HybF (113 aa).

Ni(2+) contacts are provided by His-2 and Glu-3. The Zn(2+) site is built by Cys-73, Cys-76, Cys-89, and Cys-92.

This sequence belongs to the HypA/HybF family. HybF subfamily.

Functionally, involved in the maturation of [NiFe] hydrogenases. Required for nickel insertion into the metal center of the hydrogenase. The sequence is that of Hydrogenase maturation factor HybF from Salmonella typhi.